Here is a 437-residue protein sequence, read N- to C-terminus: MRASVVLTCYCWLLVRVSSIHPECRFHLEIQEEETKCAELLSSQTENQRACSGVWDNITCWRPADVGETVTVPCPKVFSNFYSRPGNISKNCTSDGWSETFPDFIDACGYNDPEDESKISFYILVKAIYTLGYSVSLMSLTTGSIIICLFRKLHCTRNYIHLNLFLSFMLRAISVLVKDSVLYSSSGLLRCHDQPASWVGCKLSLVFFQYCIMANFYWLLVEGLYLHTLLVAILPPSRCFLAYLLIGWGIPSVCIGAWTATRLSLEDTGCWDTNDHSIPWWVIRMPILISIVVNFALFISIVRILLQKLTSPDVGGNDQSQYKRLAKSTLLLIPLFGVHYMVFAAFPIGISSTYQILFELCVGSFQGLVVAVLYCFLNSEVQCELKRRWRGLCLTQAGSRDYRLHSWSMSRNGSESALQIHRGSRTQSFLQSETSVI.

Positions 1-22 (MRASVVLTCYCWLLVRVSSIHP) are cleaved as a signal peptide. Residues 23–123 (ECRFHLEIQE…EDESKISFYI (101 aa)) are Extracellular-facing. 3 disulfides stabilise this stretch: cysteine 37/cysteine 60, cysteine 51/cysteine 92, and cysteine 74/cysteine 108. 3 N-linked (GlcNAc...) asparagine glycosylation sites follow: asparagine 57, asparagine 87, and asparagine 91. The chain crosses the membrane as a helical span at residues 124-149 (LVKAIYTLGYSVSLMSLTTGSIIICL). Residues 150–157 (FRKLHCTR) lie on the Cytoplasmic side of the membrane. A helical membrane pass occupies residues 158–179 (NYIHLNLFLSFMLRAISVLVKD). Topologically, residues 180-202 (SVLYSSSGLLRCHDQPASWVGCK) are extracellular. Cysteine 201 and cysteine 270 are disulfide-bonded. The chain crosses the membrane as a helical span at residues 203 to 227 (LSLVFFQYCIMANFYWLLVEGLYLH). At 228 to 238 (TLLVAILPPSR) the chain is on the cytoplasmic side. Residues 239–260 (CFLAYLLIGWGIPSVCIGAWTA) traverse the membrane as a helical segment. Topologically, residues 261–279 (TRLSLEDTGCWDTNDHSIP) are extracellular. Residues 280–303 (WWVIRMPILISIVVNFALFISIVR) traverse the membrane as a helical segment. Topologically, residues 304–324 (ILLQKLTSPDVGGNDQSQYKR) are cytoplasmic. Residues 325 to 345 (LAKSTLLLIPLFGVHYMVFAA) form a helical membrane-spanning segment. Over 346–353 (FPIGISST) the chain is Extracellular. A helical transmembrane segment spans residues 354 to 377 (YQILFELCVGSFQGLVVAVLYCFL). Over 378 to 437 (NSEVQCELKRRWRGLCLTQAGSRDYRLHSWSMSRNGSESALQIHRGSRTQSFLQSETSVI) the chain is Cytoplasmic.

This sequence belongs to the G-protein coupled receptor 2 family. Interacts with ADCYAP1/PACAP (via N-terminal extracellular domain); activated by PACAP27 and CAPAC38 neuropeptides. Interacts with VIP; the interaction results in VIPR1 activation. In terms of tissue distribution, expressed at high levels in the MIN6 cells, at moderate levels in pancreatic islets, insulin-secreting cells, lung, brain, stomach, and colon, and at low levels in the heart.

The protein localises to the cell membrane. G protein-coupled receptor activated by the neuropeptides vasoactive intestinal peptide (VIP) and pituitary adenylate cyclase-activating polypeptide (ADCYAP1/PACAP). Binds VIP and both PACAP27 and PACAP38 bioactive peptides with the order of ligand affinity of VIP = PACAP38 &gt; PACAP27. Ligand binding causes a conformation change that triggers signaling via guanine nucleotide-binding proteins (G proteins) and modulates the activity of downstream effectors. Activates cAMP-dependent pathway. May be coupled to phospholipase C. The sequence is that of Vasoactive intestinal polypeptide receptor 2 from Mus musculus (Mouse).